The chain runs to 316 residues: Probable cell division protein WhiA (316 aa).

The H-T-H motif DNA-binding region spans 275 to 309 (TLKELGEMVSGGKISKSGINHRLRKIDDIAEKLRA).

This sequence belongs to the WhiA family.

Its function is as follows. Involved in cell division and chromosome segregation. The polypeptide is Probable cell division protein WhiA (Bacillus anthracis (strain CDC 684 / NRRL 3495)).